The following is a 367-amino-acid chain: Endophilin-A2 (367 aa).

The membrane-binding amphipathic helix stretch occupies residues 1–21 (MSVAGLKKQFYKASQLVSEKV). A BAR domain is found at 18–249 (SEKVGGAEGT…LKRRMREASS (232 aa)). The tract at residues 60–87 (PNPASRAKLTMLNTMSKIRGQVKNPGYP) is required for dimerization upon membrane association. Residues 181-250 (EELRQAMEKF…KRRMREASSR (70 aa)) are a coiled coil. Residues 218 to 254 (LVDAQLDYHRQAVQILDELAEKLKRRMREASSRPRRE) are interaction with ARC. Residues 243-293 (RMREASSRPRREYKPKPRETYDFGESDQSNGGFSCTPTPKVSASSSFRSDK) form a disordered region. Residues 245-263 (REASSRPRREYKPKPRETY) show a composition bias toward basic and acidic residues. Residues 268–289 (SDQSNGGFSCTPTPKVSASSSF) are compositionally biased toward polar residues. The SH3 domain occupies 305-364 (LDQPCCKALYDFEPENDGELGFKEGDIITLTNQIDENWYEGMINGQSGFFPLNYVEVLVP).

It belongs to the endophilin family. Interacts with ARC. Interacts with SYNJ1 and DNM1. In terms of tissue distribution, highest level in central region of the theca of developing follicles (at protein level). Expressed at highest level in brain and testis, at high level in kidney, lung and stroma, low level in spleen and adrenal gland (at protein level). Expressed in most tissue with highest levels in small ovarian follicles, brain and testis.

The protein localises to the cytoplasm. Its subcellular location is the early endosome membrane. It localises to the cell projection. It is found in the podosome. Functionally, implicated in endocytosis. May recruit other proteins to membranes with high curvature. The polypeptide is Endophilin-A2 (Gallus gallus (Chicken)).